The primary structure comprises 376 residues: UDP-N-acetylglucosamine--N-acetylmuramyl-(pentapeptide) pyrophosphoryl-undecaprenol N-acetylglucosamine transferase (376 aa).

UDP-N-acetyl-alpha-D-glucosamine contacts are provided by residues 14-16 (TGG), Asn128, Arg169, Ser201, Ile256, and Gln301.

Belongs to the glycosyltransferase 28 family. MurG subfamily.

Its subcellular location is the cell inner membrane. It catalyses the reaction di-trans,octa-cis-undecaprenyl diphospho-N-acetyl-alpha-D-muramoyl-L-alanyl-D-glutamyl-meso-2,6-diaminopimeloyl-D-alanyl-D-alanine + UDP-N-acetyl-alpha-D-glucosamine = di-trans,octa-cis-undecaprenyl diphospho-[N-acetyl-alpha-D-glucosaminyl-(1-&gt;4)]-N-acetyl-alpha-D-muramoyl-L-alanyl-D-glutamyl-meso-2,6-diaminopimeloyl-D-alanyl-D-alanine + UDP + H(+). Its pathway is cell wall biogenesis; peptidoglycan biosynthesis. Its function is as follows. Cell wall formation. Catalyzes the transfer of a GlcNAc subunit on undecaprenyl-pyrophosphoryl-MurNAc-pentapeptide (lipid intermediate I) to form undecaprenyl-pyrophosphoryl-MurNAc-(pentapeptide)GlcNAc (lipid intermediate II). The protein is UDP-N-acetylglucosamine--N-acetylmuramyl-(pentapeptide) pyrophosphoryl-undecaprenol N-acetylglucosamine transferase of Phocaeicola vulgatus (strain ATCC 8482 / DSM 1447 / JCM 5826 / CCUG 4940 / NBRC 14291 / NCTC 11154) (Bacteroides vulgatus).